Consider the following 441-residue polypeptide: Dihydroorotase (441 aa).

Residues His77 and His79 each contribute to the Zn(2+) site. Substrate-binding positions include 79–81 (HFR) and Asn111. Residues Asp167, His194, and His248 each contribute to the Zn(2+) site. Asn294 serves as a coordination point for substrate. Asp321 serves as a coordination point for Zn(2+). Asp321 is an active-site residue. Substrate-binding positions include His325 and 339-340 (FG).

It belongs to the metallo-dependent hydrolases superfamily. DHOase family. Class I DHOase subfamily. Zn(2+) is required as a cofactor.

The enzyme catalyses (S)-dihydroorotate + H2O = N-carbamoyl-L-aspartate + H(+). It participates in pyrimidine metabolism; UMP biosynthesis via de novo pathway; (S)-dihydroorotate from bicarbonate: step 3/3. Functionally, catalyzes the reversible cyclization of carbamoyl aspartate to dihydroorotate. This chain is Dihydroorotase, found in Wolbachia sp. subsp. Drosophila simulans (strain wRi).